We begin with the raw amino-acid sequence, 593 residues long: Proline--tRNA ligase (593 aa).

This sequence belongs to the class-II aminoacyl-tRNA synthetase family. ProS type 1 subfamily. Homodimer.

It is found in the cytoplasm. The enzyme catalyses tRNA(Pro) + L-proline + ATP = L-prolyl-tRNA(Pro) + AMP + diphosphate. Catalyzes the attachment of proline to tRNA(Pro) in a two-step reaction: proline is first activated by ATP to form Pro-AMP and then transferred to the acceptor end of tRNA(Pro). As ProRS can inadvertently accommodate and process non-cognate amino acids such as alanine and cysteine, to avoid such errors it has two additional distinct editing activities against alanine. One activity is designated as 'pretransfer' editing and involves the tRNA(Pro)-independent hydrolysis of activated Ala-AMP. The other activity is designated 'posttransfer' editing and involves deacylation of mischarged Ala-tRNA(Pro). The misacylated Cys-tRNA(Pro) is not edited by ProRS. The sequence is that of Proline--tRNA ligase from Parasynechococcus marenigrum (strain WH8102).